Consider the following 545-residue polypeptide: Sphingosine-1-phosphate lyase (545 aa).

The Lumenal segment spans residues 1–26; the sequence is MRPFSGSDCLKPVTEGINRAFGAKEP. Residues 27-47 traverse the membrane as a helical; Signal-anchor for type III membrane protein segment; the sequence is WQVATITATTVLGGVWLWTVI. Topologically, residues 48-545 are cytoplasmic; sequence CQDENLYIRG…HSMYYTPSQK (498 aa). Position 342 is an N6-(pyridoxal phosphate)lysine (K342).

It belongs to the group II decarboxylase family. Sphingosine-1-phosphate lyase subfamily. The cofactor is pyridoxal 5'-phosphate. In terms of tissue distribution, localized to the developing gut primordium during embryogenesis.

It is found in the endoplasmic reticulum membrane. The catalysed reaction is sphinganine 1-phosphate = hexadecanal + phosphoethanolamine. It participates in lipid metabolism; sphingolipid metabolism. Cleaves phosphorylated sphingoid bases (PSBs), such as sphingosine-1-phosphate, into fatty aldehydes and phosphoethanolamine. Sphingolipid catabolism is required for normal development including viability, reproduction and muscle development. The polypeptide is Sphingosine-1-phosphate lyase (Drosophila melanogaster (Fruit fly)).